The primary structure comprises 30 residues: Glucagon-like peptide (30 aa).

The residue at position 30 (Arg-30) is an Arginine amide.

It belongs to the glucagon family.

The protein localises to the secreted. The protein is Glucagon-like peptide of Anguilla anguilla (European freshwater eel).